The chain runs to 130 residues: Fluoride-specific ion channel FluC (130 aa).

Transmembrane regions (helical) follow at residues 2-22 (GLLL…RFAL), 35-55 (IGIL…AAFL), 72-92 (LFVT…LDIL), and 107-127 (ILVS…FIMG). 2 residues coordinate Na(+): G79 and T82.

This sequence belongs to the fluoride channel Fluc/FEX (TC 1.A.43) family.

The protein resides in the cell inner membrane. It carries out the reaction fluoride(in) = fluoride(out). Its activity is regulated as follows. Na(+) is not transported, but it plays an essential structural role and its presence is essential for fluoride channel function. Functionally, fluoride-specific ion channel. Important for reducing fluoride concentration in the cell, thus reducing its toxicity. The protein is Fluoride-specific ion channel FluC of Francisella philomiragia subsp. philomiragia (strain ATCC 25017 / CCUG 19701 / FSC 153 / O#319-036).